Consider the following 299-residue polypeptide: 4-diphosphocytidyl-2-C-methyl-D-erythritol kinase (299 aa).

Lys-10 is an active-site residue. ATP is bound at residue Pro-96–Ala-106. Asp-138 is a catalytic residue.

Belongs to the GHMP kinase family. IspE subfamily.

It catalyses the reaction 4-CDP-2-C-methyl-D-erythritol + ATP = 4-CDP-2-C-methyl-D-erythritol 2-phosphate + ADP + H(+). The protein operates within isoprenoid biosynthesis; isopentenyl diphosphate biosynthesis via DXP pathway; isopentenyl diphosphate from 1-deoxy-D-xylulose 5-phosphate: step 3/6. Catalyzes the phosphorylation of the position 2 hydroxy group of 4-diphosphocytidyl-2C-methyl-D-erythritol. The protein is 4-diphosphocytidyl-2-C-methyl-D-erythritol kinase of Streptomyces coelicolor (strain ATCC BAA-471 / A3(2) / M145).